The following is a 317-amino-acid chain: Ribosomal protein L11 methyltransferase (317 aa).

S-adenosyl-L-methionine-binding residues include Thr-158, Gly-179, Asp-201, and Asn-244.

The protein belongs to the methyltransferase superfamily. PrmA family.

It localises to the cytoplasm. It carries out the reaction L-lysyl-[protein] + 3 S-adenosyl-L-methionine = N(6),N(6),N(6)-trimethyl-L-lysyl-[protein] + 3 S-adenosyl-L-homocysteine + 3 H(+). Functionally, methylates ribosomal protein L11. The protein is Ribosomal protein L11 methyltransferase of Streptococcus pyogenes serotype M6 (strain ATCC BAA-946 / MGAS10394).